A 320-amino-acid polypeptide reads, in one-letter code: Transcription factor NAI1 (320 aa).

A disordered region spans residues 53–105 (TKQMKTNNNMNSTSSSPSSSSSSGSRTSQVISFGSPDTKTNPVETSLNFSNQV). A compositionally biased stretch (low complexity) spans 58-80 (TNNNMNSTSSSPSSSSSSGSRTS). Residues 81-105 (QVISFGSPDTKTNPVETSLNFSNQV) are compositionally biased toward polar residues. In terms of domain architecture, bHLH spans 128–177 (HLLKEHVLAERKRRQKLNERLIALSALLPGLKKTDKATVLEDAIKHLKQL).

In terms of assembly, homodimer. Expressed constitutively in roots, leaves, stems, and flowers.

The protein localises to the nucleus. In terms of biological role, transcription activator that regulates the expression of at least NAI2, PYK10 and PBP1. Required for and mediates the formation of endoplasmic reticulum bodies (ER bodies). Involved in the symbiotic interactions with the endophytes of the Sebacinaceae fungus family, such as Piriformospora indica and Sebacina. The protein is Transcription factor NAI1 (NAI1) of Arabidopsis thaliana (Mouse-ear cress).